Consider the following 267-residue polypeptide: Hydroxyacylglutathione hydrolase (267 aa).

Positions 55, 57, 59, 60, 121, 138, and 176 each coordinate Zn(2+).

It belongs to the metallo-beta-lactamase superfamily. Glyoxalase II family. As to quaternary structure, monomer. The cofactor is Zn(2+).

It catalyses the reaction an S-(2-hydroxyacyl)glutathione + H2O = a 2-hydroxy carboxylate + glutathione + H(+). The protein operates within secondary metabolite metabolism; methylglyoxal degradation; (R)-lactate from methylglyoxal: step 2/2. Its function is as follows. Thiolesterase that catalyzes the hydrolysis of S-D-lactoyl-glutathione to form glutathione and D-lactic acid. The polypeptide is Hydroxyacylglutathione hydrolase (Shewanella sp. (strain ANA-3)).